We begin with the raw amino-acid sequence, 318 residues long: Galactinol synthase 1 (318 aa).

Lys102 is a catalytic residue. Mn(2+) is bound by residues Asp118, Asp120, and His244.

The protein belongs to the glycosyltransferase 8 family. Galactosyltransferase subfamily. It depends on a divalent metal cation as a cofactor. Expressed in seeds, mostly in radicle tips.

The protein resides in the cytoplasm. The catalysed reaction is myo-inositol + UDP-alpha-D-galactose = alpha-D-galactosyl-(1-&gt;3)-1D-myo-inositol + UDP + H(+). Functionally, galactinol synthase involved in the biosynthesis of raffinose family oligosaccharides (RFOs) that function as osmoprotectants. May promote plant stress tolerance. This chain is Galactinol synthase 1 (GOLS1), found in Solanum lycopersicum (Tomato).